Consider the following 118-residue polypeptide: Small ribosomal subunit protein uS13 (118 aa).

A disordered region spans residues 94–118 (GLPLRGQRTRTNARTRKGPRKAIRK).

The protein belongs to the universal ribosomal protein uS13 family. As to quaternary structure, part of the 30S ribosomal subunit. Forms a loose heterodimer with protein S19. Forms two bridges to the 50S subunit in the 70S ribosome.

Its function is as follows. Located at the top of the head of the 30S subunit, it contacts several helices of the 16S rRNA. In the 70S ribosome it contacts the 23S rRNA (bridge B1a) and protein L5 of the 50S subunit (bridge B1b), connecting the 2 subunits; these bridges are implicated in subunit movement. Contacts the tRNAs in the A and P-sites. The protein is Small ribosomal subunit protein uS13 of Xanthomonas axonopodis pv. citri (strain 306).